The chain runs to 191 residues: Putative NADH dehydrogenase/NAD(P)H nitroreductase (191 aa).

127–132 (AAHSLG) is an NAD(+) binding site.

This sequence belongs to the nitroreductase family. It depends on FMN as a cofactor.

In Methanothermobacter thermautotrophicus (strain ATCC 29096 / DSM 1053 / JCM 10044 / NBRC 100330 / Delta H) (Methanobacterium thermoautotrophicum), this protein is Putative NADH dehydrogenase/NAD(P)H nitroreductase.